An 88-amino-acid polypeptide reads, in one-letter code: Cell division topological specificity factor (88 aa).

It belongs to the MinE family.

Its function is as follows. Prevents the cell division inhibition by proteins MinC and MinD at internal division sites while permitting inhibition at polar sites. This ensures cell division at the proper site by restricting the formation of a division septum at the midpoint of the long axis of the cell. This chain is Cell division topological specificity factor, found in Salmonella agona (strain SL483).